The following is a 150-amino-acid chain: Ribosomal RNA large subunit methyltransferase H (150 aa).

S-adenosyl-L-methionine contacts are provided by residues Ile71, Ala100, and 118–123 (LSEMTF).

The protein belongs to the RNA methyltransferase RlmH family. In terms of assembly, homodimer.

The protein localises to the cytoplasm. It carries out the reaction pseudouridine(1915) in 23S rRNA + S-adenosyl-L-methionine = N(3)-methylpseudouridine(1915) in 23S rRNA + S-adenosyl-L-homocysteine + H(+). Specifically methylates the pseudouridine at position 1915 (m3Psi1915) in 23S rRNA. In Helicobacter acinonychis (strain Sheeba), this protein is Ribosomal RNA large subunit methyltransferase H.